The chain runs to 419 residues: Synaptotagmin-1 (419 aa).

The Vesicular segment spans residues 1-57 (MVSESHHEALAAPPVTTVATVLPSNATEPASPGEGKEDAFSKLKEKFMNELHKIPLP). An N-linked (GlcNAc...) asparagine glycan is attached at Asn25. Residues 58–80 (PWALIAIAIVAVLLVLTCCFCIC) form a helical membrane-spanning segment. 5 S-palmitoyl cysteine lipidation sites follow: Cys75, Cys76, Cys78, Cys80, and Cys83. The Cytoplasmic portion of the chain corresponds to 81–419 (KKCLFKKKNK…EVDAMLAVKK (339 aa)). The disordered stretch occupies residues 108–139 (KDLGKTMKDQDDDAETGLTDGEEKEEPKEEEK). Acidic residues predominate over residues 117–131 (QDDDAETGLTDGEEK). Thr126 is subject to Phosphothreonine. Positions 133–379 (EPKEEEKLGK…AIGKVFVGYN (247 aa)) are phospholipid binding. The C2 1 domain maps to 139–258 (KLGKLQYSLD…DFGHVTEEWR (120 aa)). The Ca(2+) site is built by Leu169, Asp170, and Asp176. At Tyr227 the chain carries Phosphotyrosine. Ca(2+) is bound by residues Asp228, Phe229, Asp230, Ser233, Lys234, and Asp236. Ser262 is modified (phosphoserine). The C2 2 domain occupies 270–403 (KLGDICFSLR…NPRRPIAQWH (134 aa)). Asp301 and Asp307 together coordinate Ca(2+). Ser340 and Ser342 each carry phosphoserine. Ca(2+) contacts are provided by Asp361, Asp363, and Asp369.

The protein belongs to the synaptotagmin family. Homotetramer. Heterodimer; heterodimerizes with SYT2 in presence of calcium. Interacts with SCAMP5. Interacts with STON2. Forms a complex with SV2B, syntaxin 1 and SNAP25. Interacts with SV2A, SV2B and SV2C. Interacts with RIMS1. Interacts with PRRT2. Interacts with DNAJC5 in a phosphorylation-dependent manner. Interacts (via N-terminus) with RAB3A. Interacts with SYT12. Interacts with calmodulin. Interacts with DNM1 (via C-terminal proline-rich domain (PRD)); this interaction facilitates vesicle fission during clathrin-mediated endocytosis (CME). It depends on Ca(2+) as a cofactor. Glycosylated.

Its subcellular location is the cytoplasmic vesicle. It localises to the secretory vesicle membrane. The protein localises to the secretory vesicle. The protein resides in the synaptic vesicle membrane. It is found in the chromaffin granule membrane. Its subcellular location is the cytoplasm. Its function is as follows. Calcium sensor that participates in triggering neurotransmitter release at the synapse. May have a regulatory role in the membrane interactions during trafficking of synaptic vesicles at the active zone of the synapse. It binds acidic phospholipids with a specificity that requires the presence of both an acidic head group and a diacyl backbone. A Ca(2+)-dependent interaction between synaptotagmin and putative receptors for activated protein kinase C has also been reported. It can bind to at least three additional proteins in a Ca(2+)-independent manner; these are neurexins, syntaxin and AP2. Plays a role in dendrite formation by melanocytes. This is Synaptotagmin-1 from Macaca fascicularis (Crab-eating macaque).